We begin with the raw amino-acid sequence, 1305 residues long: MVITVQGADLVRRALNRLFKYGRIDGTKMYYEYYRYSSKMRETRRKKGTKYKTDDEFLERERDAGRLKLYDLQVIREASWEDLLYENVHTAELDIYVRSILKLEDLEPEEEFLRNYAVYDGVHPLKDFVEMRAKNEMQIFGDMPIKAWISVLMEISRETKHKPLGLMVASDFVGRFGSPFEQNFRDLSQINEYGYCYSSPLLFEMCVTESILEFNMWYRMREERIQSLKFGLEVIDPFKLIREFFEICLPHPKKINNTLRSPYSWFVKNWGIGCSRVKVLTSIGGEDRNSKEVFYTGYHETENLYSEIVLKSKFYRESLKQNMTKTEEAITYSQKLGNHGRTMPIFLKMLKAVYTTEFDPTKISHVILASLCLSIQTITGYGRAWVVNKSSDLEAQMKPSSDNYVQRVCDYTKNNFIKAYEEARRGGEEIVMPEDMYTSILRLAKNTSSGFSTSIDVFKRYGPNAKGGRGEKIQITSRIKALVIFTKGHEIFTPKNLALKYNTTEFFQTKGSRDVPIKSTRIVYSINLSILVPQLIVTLPLNEYFARAGGSTLPETQRMGGKIIVGDLEATGSRVMDAADTFRNSSDPLNLTIAIDYSEFDTHLTPYNFRNGMLDGIREAMRRYQHLRYEGYTLDELIEFGYGEGRVMNTLWNGKRRVFKVAFEDYVMLSDEDKVQGTFKPPIGVKPVKNIKICEELEKKADGRDLILVSPTDGSDLALINTHLSGENSTLIANSLHNLAIGTVIREEVKRIFGDDISFKSEQYVGDDTLFYTELRTRSVERFDSIVDTIFEVIKKSGHEASMSKTLIAPFSVEKTQTHAKQGIYIPQDRMMLVSSERRKDIEDVAGYLRSQVQTLTTKISRGFSHELAQIIFMMKSSIIGHRKLKRTIKDGGYRDRKYDDDKEDGFTLIMLRDPLIAFYPVEWNGFGAHPAAMNIIMTEDMFVDSVMRGECRAWMEPLVKLIDQSPPLWNETSADKRMIGTDSTMSFFSRMARPAVRTVLTNSEVGDAVRSLPLGDFSPFNISKTMMHSALLKEKNARSLLTPAYEMEYQKELQGWRPRQKKFLVTSNEMEITTNYMKMFNVGKIPLHGLALKFFPDVNLSKEFFLQKSVLGNRESPRARMSYVDRIDSILRGDVVMRGFITANTIINILEKLGHTHSASDLTTLFEIMNLSSSVAQRLSEYITTERVRFDAMKLSKRGICGDEFSMSLDVCTQTMVDRYIRAPTQFTKTELDAVNLYVAQHIMLDAATGLTPSRYDINVSGDERVRFKQRVARFNTHLPKMRMVKRLIETERLSARLVQNQFV.

Residues 563-814 (IIVGDLEATG…KTLIAPFSVE (252 aa)) form the RdRp catalytic domain.

Belongs to the reoviridae RNA-directed RNA polymerase family.

It carries out the reaction RNA(n) + a ribonucleoside 5'-triphosphate = RNA(n+1) + diphosphate. The protein is RNA-directed RNA polymerase (Segment-1) of African horse sickness virus (AHSV).